The sequence spans 197 residues: Holliday junction branch migration complex subunit RuvA (197 aa).

The interval 1-63 (MYAYLKGIIT…EDAHLLYGFR (63 aa)) is domain I. Positions 64 to 142 (SEDEKKLFLS…VAGDDLPAKI (79 aa)) are domain II. A flexible linker region spans residues 143-147 (AVQAS). The domain III stretch occupies residues 148-197 (AENQELEEAMEAMLALGYKATELKKIKKFFEGTTDTAENYIKSALKMLVK).

The protein belongs to the RuvA family. As to quaternary structure, homotetramer. Forms an RuvA(8)-RuvB(12)-Holliday junction (HJ) complex. HJ DNA is sandwiched between 2 RuvA tetramers; dsDNA enters through RuvA and exits via RuvB. An RuvB hexamer assembles on each DNA strand where it exits the tetramer. Each RuvB hexamer is contacted by two RuvA subunits (via domain III) on 2 adjacent RuvB subunits; this complex drives branch migration. In the full resolvosome a probable DNA-RuvA(4)-RuvB(12)-RuvC(2) complex forms which resolves the HJ.

It localises to the cytoplasm. Its function is as follows. The RuvA-RuvB-RuvC complex processes Holliday junction (HJ) DNA during genetic recombination and DNA repair, while the RuvA-RuvB complex plays an important role in the rescue of blocked DNA replication forks via replication fork reversal (RFR). RuvA specifically binds to HJ cruciform DNA, conferring on it an open structure. The RuvB hexamer acts as an ATP-dependent pump, pulling dsDNA into and through the RuvAB complex. HJ branch migration allows RuvC to scan DNA until it finds its consensus sequence, where it cleaves and resolves the cruciform DNA. This chain is Holliday junction branch migration complex subunit RuvA, found in Streptococcus pneumoniae (strain Taiwan19F-14).